The primary structure comprises 214 residues: UPF0056 membrane protein aq_540 (214 aa).

6 helical membrane-spanning segments follow: residues 17 to 37, 47 to 67, 73 to 93, 122 to 142, 153 to 173, and 185 to 205; these read FLSLLAIMNPFSSVPVVISLM, VIALKASVYAFFILTFFLISG, FMGITLPAFKVGGGILLFLIA, LIPLAMPLLAGPGSITTVLVL, VALFCAIFLSSFTAFVVYSLS, and INLITRISGILLLAISVQFVV.

Belongs to the UPF0056 (MarC) family.

It is found in the cell membrane. This is UPF0056 membrane protein aq_540 from Aquifex aeolicus (strain VF5).